The sequence spans 427 residues: Chaperone SurA (427 aa).

A signal peptide spans 1–13 (MLGVALLSGAVHA). 2 consecutive PpiC domains span residues 164–265 (SEEY…KLEE) and 275–374 (RDEV…EVLG).

Its subcellular location is the periplasm. It catalyses the reaction [protein]-peptidylproline (omega=180) = [protein]-peptidylproline (omega=0). Chaperone involved in the correct folding and assembly of outer membrane proteins. Recognizes specific patterns of aromatic residues and the orientation of their side chains, which are found more frequently in integral outer membrane proteins. May act in both early periplasmic and late outer membrane-associated steps of protein maturation. In Pseudomonas putida (strain ATCC 47054 / DSM 6125 / CFBP 8728 / NCIMB 11950 / KT2440), this protein is Chaperone SurA.